Here is a 1157-residue protein sequence, read N- to C-terminus: ATP-dependent helicase/deoxyribonuclease subunit B (1157 aa).

Residues 1 to 275 (MTLHAYLGRA…QYFNQLYRFN (275 aa)) enclose the UvrD-like helicase ATP-binding domain. 8 to 15 (GRAGTGKS) provides a ligand contact to ATP. The 315-residue stretch at 269–583 (NQLYRFNNQD…SIGTMDLAKV (315 aa)) folds into the UvrD-like helicase C-terminal domain. [4Fe-4S] cluster is bound by residues Cys784, Cys1112, Cys1115, and Cys1121.

It belongs to the helicase family. AddB/RexB type 1 subfamily. Heterodimer of AddA and AddB. Mg(2+) is required as a cofactor. [4Fe-4S] cluster serves as cofactor.

In terms of biological role, the heterodimer acts as both an ATP-dependent DNA helicase and an ATP-dependent, dual-direction single-stranded exonuclease. Recognizes the chi site generating a DNA molecule suitable for the initiation of homologous recombination. The AddB subunit has 5' -&gt; 3' nuclease activity but not helicase activity. In Staphylococcus aureus (strain JH9), this protein is ATP-dependent helicase/deoxyribonuclease subunit B.